The primary structure comprises 501 residues: DDB1- and CUL4-associated factor 12-like protein 1 (501 aa).

Polar residues predominate over residues 1-37; it reads MRQADSQTQPSPAEQETPQPAGPSNRSPPTMGPQQTG. Residues 1-67 are disordered; it reads MRQADSQTQP…PAAPMATAGE (67 aa). 4 WD repeats span residues 185-225, 230-268, 298-337, and 384-423; these read PPSC…PVCL, GHRD…FNGS, PGNR…SRLL, and SREG…FLEE.

Belongs to the WD repeat DCAF12 family.

This Mus musculus (Mouse) protein is DDB1- and CUL4-associated factor 12-like protein 1 (Dcaf12l1).